The following is a 55-amino-acid chain: ATP synthase protein 8 (55 aa).

The helical transmembrane segment at 7–24 (NPWFFIMIISWLTYSMII) threads the bilayer. Residues 34-55 (TNPPARKEPTTNTTTPWNWPWT) are disordered. Residues 43 to 55 (TTNTTTPWNWPWT) are compositionally biased toward low complexity.

This sequence belongs to the ATPase protein 8 family. As to quaternary structure, F-type ATPases have 2 components, CF(1) - the catalytic core - and CF(0) - the membrane proton channel.

The protein resides in the mitochondrion membrane. Mitochondrial membrane ATP synthase (F(1)F(0) ATP synthase or Complex V) produces ATP from ADP in the presence of a proton gradient across the membrane which is generated by electron transport complexes of the respiratory chain. F-type ATPases consist of two structural domains, F(1) - containing the extramembraneous catalytic core and F(0) - containing the membrane proton channel, linked together by a central stalk and a peripheral stalk. During catalysis, ATP synthesis in the catalytic domain of F(1) is coupled via a rotary mechanism of the central stalk subunits to proton translocation. Part of the complex F(0) domain. Minor subunit located with subunit a in the membrane. The chain is ATP synthase protein 8 (MT-ATP8) from Vireo altiloquus (Black-whiskered vireo).